Here is a 389-residue protein sequence, read N- to C-terminus: S-adenosylmethionine synthase (389 aa).

Histidine 17 provides a ligand contact to ATP. Aspartate 19 serves as a coordination point for Mg(2+). Glutamate 45 serves as a coordination point for K(+). The L-methionine site is built by glutamate 58 and glutamine 101. The interval 101–111 (QSPDISQGVTE) is flexible loop. ATP contacts are provided by residues 168 to 170 (DSK), 234 to 235 (RF), aspartate 243, 249 to 250 (RK), alanine 266, and lysine 270. L-methionine is bound at residue aspartate 243. Residue lysine 274 coordinates L-methionine.

The protein belongs to the AdoMet synthase family. As to quaternary structure, homotetramer; dimer of dimers. Mg(2+) is required as a cofactor. It depends on K(+) as a cofactor.

It is found in the cytoplasm. It catalyses the reaction L-methionine + ATP + H2O = S-adenosyl-L-methionine + phosphate + diphosphate. It participates in amino-acid biosynthesis; S-adenosyl-L-methionine biosynthesis; S-adenosyl-L-methionine from L-methionine: step 1/1. Catalyzes the formation of S-adenosylmethionine (AdoMet) from methionine and ATP. The overall synthetic reaction is composed of two sequential steps, AdoMet formation and the subsequent tripolyphosphate hydrolysis which occurs prior to release of AdoMet from the enzyme. The chain is S-adenosylmethionine synthase from Geobacter metallireducens (strain ATCC 53774 / DSM 7210 / GS-15).